Reading from the N-terminus, the 66-residue chain is Beta-mammal toxin Co2 (66 aa).

The LCN-type CS-alpha/beta domain occupies 1–66; that stretch reads KEGYIVNYHD…VWPLPKKRCN (66 aa). 4 disulfide bridges follow: Cys12–Cys65, Cys16–Cys41, Cys25–Cys46, and Cys29–Cys48.

As to expression, expressed by the venom gland.

It localises to the secreted. Beta toxins bind voltage-independently at site-4 of sodium channels (Nav) and shift the voltage of activation toward more negative potentials thereby affecting sodium channel activation and promoting spontaneous and repetitive firing. This toxin acts on human Nav1.1/SCN1A, Nav1.2/SCN2A, Nav1.4/SCN4A and Nav1.6/SCN8A voltage-gated sodium channels. Also, it reduces the peak of sodium currents in Nav1.5/SCN5A at all potentials. In vivo, is lethal to mice when intraperitoneally injected at a dose of 5ug. No activity is observed when injected into crickets or woodlice. The polypeptide is Beta-mammal toxin Co2 (Centruroides ornatus (Scorpion)).